The sequence spans 118 residues: Holin-like protein CidA 2 (118 aa).

A run of 4 helical transmembrane segments spans residues Val-4–Val-26, Gly-33–Leu-52, Leu-62–Leu-84, and Ile-91–Leu-113.

The protein belongs to the CidA/LrgA family. CidA subfamily.

Its subcellular location is the cell membrane. Functionally, increases the activity of extracellular murein hydrolases possibly by mediating their export via hole formation. Inhibited by the antiholin-like proteins LrgAB. In an unstressed cell, the LrgAB products probably inhibit the function of the CidA protein. When a cell is stressed by the addition of antibiotics or by other factors in the environment, CidA possibly oligomerizes within the bacterial cell membrane, creating lesions that disrupt the proton motive force, which in turn results in loss of cell viability. These lesions are also hypothesized to regulate the subsequent cell lysis by either allowing the murein hydrolases access to the cell wall substrate and/or regulating their activity by a possible change in the cell wall pH that results from loss of membrane potential. This Bacillus cereus (strain ATCC 14579 / DSM 31 / CCUG 7414 / JCM 2152 / NBRC 15305 / NCIMB 9373 / NCTC 2599 / NRRL B-3711) protein is Holin-like protein CidA 2 (cidA2).